The chain runs to 359 residues: 3-dehydroquinate synthase (359 aa).

Residues 106–110 (GVVGD), 130–131 (TS), Lys143, and Lys152 each bind NAD(+). Zn(2+)-binding residues include Glu185, His246, and His263.

It belongs to the sugar phosphate cyclases superfamily. Dehydroquinate synthase family. It depends on Co(2+) as a cofactor. Zn(2+) serves as cofactor. The cofactor is NAD(+).

The protein resides in the cytoplasm. The enzyme catalyses 7-phospho-2-dehydro-3-deoxy-D-arabino-heptonate = 3-dehydroquinate + phosphate. Its pathway is metabolic intermediate biosynthesis; chorismate biosynthesis; chorismate from D-erythrose 4-phosphate and phosphoenolpyruvate: step 2/7. In terms of biological role, catalyzes the conversion of 3-deoxy-D-arabino-heptulosonate 7-phosphate (DAHP) to dehydroquinate (DHQ). The protein is 3-dehydroquinate synthase of Clostridium kluyveri (strain ATCC 8527 / DSM 555 / NBRC 12016 / NCIMB 10680 / K1).